Reading from the N-terminus, the 242-residue chain is Large ribosomal subunit protein uL30x (242 aa).

Belongs to the universal ribosomal protein uL30 family.

The chain is Large ribosomal subunit protein uL30x (RPL7C) from Arabidopsis thaliana (Mouse-ear cress).